A 166-amino-acid polypeptide reads, in one-letter code: NSAAIFNFSYERYDWVRPGIMLYGISPFADKNGVDLELQPVMHVVSRLISVKQLRQGESVGYGATWQCPEDMQVGILSLGYGDGYPRLAASGTPFLVRGQRCALIGRVSMDMIAIDLRRCPDAGVGEAVTVWGQDLPVEEIARHVGTIAYELVCNMPLRAPYIWQE.

Residue Tyr62 is the Proton acceptor; specific for L-alanine of the active site. Met110 is a substrate binding site.

It belongs to the alanine racemase family. Requires pyridoxal 5'-phosphate as cofactor.

The catalysed reaction is L-alanine = D-alanine. It participates in amino-acid biosynthesis; D-alanine biosynthesis; D-alanine from L-alanine: step 1/1. In terms of biological role, catalyzes the interconversion of L-alanine and D-alanine. May also act on other amino acids. This Piscirickettsia salmonis protein is Alanine racemase (alr).